We begin with the raw amino-acid sequence, 1087 residues long: A-kinase anchor protein 9 (1087 aa).

The stretch at 5–461 (EVQCQAEKVR…REREKMERIQ (457 aa)) forms a coiled coil. Positions 559–572 (SLQKVLEEKVAAAL) are PKA-RII subunit binding domain. Positions 614–773 (MESDVSALTW…SEKEDKTEVQ (160 aa)) form a coiled coil. A compositionally biased stretch (basic and acidic residues) spans 667-685 (VQDSETKQRERERQSRLHG). The interval 667-691 (VQDSETKQRERERQSRLHGDLGVLE) is disordered.

As to quaternary structure, interacts with the regulatory region of protein kinase N (PKN), protein phosphatase 2A (PP2A), protein phosphatase 1 (PP1) and the immature non-phosphorylated form of PKC epsilon. Interacts with CIP4 and FNBP1. Interacts with chloride intracellular channel proteins CLIC1, CLIC4 and CLIC5. CSNK1D binding promotes its centrosomal subcellular location. Interacts with GM130/GOLGA2; leading to recruitment to the Golgi apparatus. Interacts with KCNQ1; targets protein kinase A (PKA) catalytic and regulatory subunits and protein phosphatase 1 (PP1), to the heterodimer KCNQ1-KCNE1. Interacts with PDE4DIP; this interaction stabilizes both proteins. In complex with PDE4DIP, recruits CAMSAP2 to the Golgi apparatus. Forms a pericentrosomal complex with CDK5RAP2, EB1/MAPRE1 and PDE4DIP; within this complex, MAPRE1 binding to CDK5RAP2 may be mediated by PDE4DIP. The interaction with PDE4DIP is isoform-specific. Interacts with MAPRE1 and MAPRE3. Interacts (via C-terminus) with CAMSAP2; this interaction is much stronger in the presence of PDE4DIP. Interacts with CAMSAP3. Interacts (via C-terminus) with the gamma-tubulin ring complex (gamma-TuRC), composed of gamma-tubulin, TUBGCP2, TUBGCP3, TUBGCP4, TUBGCP5 and TUBGCP6. In terms of tissue distribution, highly expressed in gastric parietal cells.

It localises to the golgi apparatus. The protein localises to the cytoplasm. Its subcellular location is the cytoskeleton. It is found in the microtubule organizing center. The protein resides in the centrosome. In terms of biological role, scaffolding protein that assembles several protein kinases and phosphatases on the centrosome and Golgi apparatus. Required to maintain the integrity of the Golgi apparatus. Required for microtubule nucleation at the cis-side of the Golgi apparatus. Required for association of the centrosomes with the poles of the bipolar mitotic spindle during metaphase. In complex with PDE4DIP, recruits CAMSAP2 to the Golgi apparatus and tethers non-centrosomal minus-end microtubules to the Golgi, an important step for polarized cell movement. In complex with PDE4DIP, EB1/MAPRE1 and CDK5RAP2, contributes to microtubules nucleation and extension also from the centrosome to the cell periphery. The interaction with PDE4DIP is isoform-specific. This Oryctolagus cuniculus (Rabbit) protein is A-kinase anchor protein 9 (AKAP9).